We begin with the raw amino-acid sequence, 332 residues long: Adenosine receptor A2b (332 aa).

Residues M1–A8 are Extracellular-facing. The chain crosses the membrane as a helical span at residues L9–G33. Residues T34–N43 lie on the Cytoplasmic side of the membrane. Residues Y44–I67 traverse the membrane as a helical segment. Over S68–C78 the chain is Extracellular. Residues C78 and C170 are joined by a disulfide bond. The helical transmembrane segment at L79 to V101 threads the bilayer. The Cytoplasmic portion of the chain corresponds to D102–R121. A helical membrane pass occupies residues A122–W144. The Extracellular portion of the chain corresponds to N145–P177. N-linked (GlcNAc...) asparagine glycans are attached at residues N152 and N162. Residue E173 participates in adenosine binding. Residues M178–I202 form a helical membrane-spanning segment. Residues K203–S234 are Cytoplasmic-facing. Residues L235–F258 form a helical membrane-spanning segment. N253 serves as a coordination point for adenosine. Residues Q259–K266 are Extracellular-facing. A helical transmembrane segment spans residues P267–A290. Residues S278 and H279 each contribute to the adenosine site. Residues Y291 to L332 are Cytoplasmic-facing. C310 carries the S-palmitoyl cysteine lipid modification.

The protein belongs to the G-protein coupled receptor 1 family.

The protein localises to the cell membrane. Its function is as follows. Receptor for adenosine. The activity of this receptor is mediated by G proteins which activate adenylyl cyclase. The sequence is that of Adenosine receptor A2b (ADORA2B) from Canis lupus familiaris (Dog).